Consider the following 110-residue polypeptide: MAVSGLSGIESMLQQMRAVVQAAQSNGVSPAELAPQPASFAAELQRSLQRVSAAQIAATNQGKAYELGAPGVSLNDVMIDLQKSSIAFQTAVQVRNRLVAAYKEISAMSV.

It belongs to the FliE family.

It is found in the bacterial flagellum basal body. The chain is Flagellar hook-basal body complex protein FliE from Bordetella petrii (strain ATCC BAA-461 / DSM 12804 / CCUG 43448).